The chain runs to 20 residues: Calreticulin (20 aa).

It belongs to the calreticulin family. Glycosylated.

It localises to the endoplasmic reticulum lumen. Its function is as follows. Molecular calcium-binding chaperone promoting folding, oligomeric assembly and quality control in the ER via the calreticulin/calnexin cycle. This lectin may interact transiently with almost all of the monoglucosylated glycoproteins that are synthesized in the ER. The chain is Calreticulin from Spinacia oleracea (Spinach).